Here is a 102-residue protein sequence, read N- to C-terminus: RNA-binding protein Hfq (102 aa).

The Sm domain occupies Asp9–Val68. Residues Val63 to Glu102 are disordered. Over residues His70–Asn88 the composition is skewed to low complexity.

The protein belongs to the Hfq family. Homohexamer.

In terms of biological role, RNA chaperone that binds small regulatory RNA (sRNAs) and mRNAs to facilitate mRNA translational regulation in response to envelope stress, environmental stress and changes in metabolite concentrations. Also binds with high specificity to tRNAs. This is RNA-binding protein Hfq from Salmonella agona (strain SL483).